A 314-amino-acid polypeptide reads, in one-letter code: Methionyl-tRNA formyltransferase (314 aa).

113–116 (SLLP) is a (6S)-5,6,7,8-tetrahydrofolate binding site.

Belongs to the Fmt family.

The enzyme catalyses L-methionyl-tRNA(fMet) + (6R)-10-formyltetrahydrofolate = N-formyl-L-methionyl-tRNA(fMet) + (6S)-5,6,7,8-tetrahydrofolate + H(+). Functionally, attaches a formyl group to the free amino group of methionyl-tRNA(fMet). The formyl group appears to play a dual role in the initiator identity of N-formylmethionyl-tRNA by promoting its recognition by IF2 and preventing the misappropriation of this tRNA by the elongation apparatus. The protein is Methionyl-tRNA formyltransferase of Pseudomonas syringae pv. tomato (strain ATCC BAA-871 / DC3000).